Reading from the N-terminus, the 846-residue chain is Sucrose synthase 6 (846 aa).

The tract at residues 276 to 755 (CVFTVVIFSI…GLQRIYECYT (480 aa)) is GT-B glycosyltransferase.

This sequence belongs to the glycosyltransferase 1 family. Plant sucrose synthase subfamily.

It catalyses the reaction an NDP-alpha-D-glucose + D-fructose = a ribonucleoside 5'-diphosphate + sucrose + H(+). In terms of biological role, sucrose-cleaving enzyme that provides UDP-glucose and fructose for various metabolic pathways. The protein is Sucrose synthase 6 (SUS6) of Oryza sativa subsp. japonica (Rice).